A 305-amino-acid polypeptide reads, in one-letter code: Acetyl-coenzyme A carboxylase carboxyl transferase subunit beta (305 aa).

Positions 23–292 (GWLKCTHCNE…EENEPSPPPK (270 aa)) constitute a CoA carboxyltransferase N-terminal domain. Residues C27, C30, C46, and C49 each contribute to the Zn(2+) site. The C4-type zinc finger occupies 27 to 49 (CTHCNELIHANELEQNSNCCPKC). The segment at 281–305 (FSEENEPSPPPKNLIKKTSPLKDKN) is disordered.

It belongs to the AccD/PCCB family. As to quaternary structure, acetyl-CoA carboxylase is a heterohexamer composed of biotin carboxyl carrier protein (AccB), biotin carboxylase (AccC) and two subunits each of ACCase subunit alpha (AccA) and ACCase subunit beta (AccD). It depends on Zn(2+) as a cofactor.

The protein resides in the cytoplasm. It catalyses the reaction N(6)-carboxybiotinyl-L-lysyl-[protein] + acetyl-CoA = N(6)-biotinyl-L-lysyl-[protein] + malonyl-CoA. Its pathway is lipid metabolism; malonyl-CoA biosynthesis; malonyl-CoA from acetyl-CoA: step 1/1. Its function is as follows. Component of the acetyl coenzyme A carboxylase (ACC) complex. Biotin carboxylase (BC) catalyzes the carboxylation of biotin on its carrier protein (BCCP) and then the CO(2) group is transferred by the transcarboxylase to acetyl-CoA to form malonyl-CoA. The chain is Acetyl-coenzyme A carboxylase carboxyl transferase subunit beta from Protochlamydia amoebophila (strain UWE25).